A 281-amino-acid chain; its full sequence is Diaminopimelate epimerase (281 aa).

2 residues coordinate substrate: Asn-11 and Asn-65. The active-site Proton donor is the Cys-74. Substrate is bound by residues 75-76 (GN), Asn-164, Asn-197, and 215-216 (ER). Residue Cys-224 is the Proton acceptor of the active site. 225-226 (GT) is a binding site for substrate.

It belongs to the diaminopimelate epimerase family. Homodimer.

It localises to the cytoplasm. The enzyme catalyses (2S,6S)-2,6-diaminopimelate = meso-2,6-diaminopimelate. The protein operates within amino-acid biosynthesis; L-lysine biosynthesis via DAP pathway; DL-2,6-diaminopimelate from LL-2,6-diaminopimelate: step 1/1. In terms of biological role, catalyzes the stereoinversion of LL-2,6-diaminopimelate (L,L-DAP) to meso-diaminopimelate (meso-DAP), a precursor of L-lysine and an essential component of the bacterial peptidoglycan. The chain is Diaminopimelate epimerase from Heliobacterium modesticaldum (strain ATCC 51547 / Ice1).